Reading from the N-terminus, the 201-residue chain is Ras-related protein Rab-9A (201 aa).

Residue A2 is modified to N-acetylalanine. The GTP site is built by G17, V18, G19, K20, S21, S22, S34, H38, and T39. S21 contributes to the Mg(2+) binding site. The short motif at K31–V42 is the Switch 1 element. S34 bears the Phosphoserine mark. T39 and D62 together coordinate Mg(2+). Positions A64–R78 match the Switch 2 motif. Residues G65, N124, K125, D127, and K156 each contribute to the GTP site. Position 179 is a phosphoserine (S179). T187 is subject to Phosphothreonine. Residues C200 and C201 are each lipidated (S-geranylgeranyl cysteine).

The protein belongs to the small GTPase superfamily. Rab family. Interacts (preferentially in its GTP-bound form) with GCC2 (via its GRIP domain). Interacts (GTP-bound form) with SGSM1; the GDP-bound form has much lower affinity for SGSM1. Interacts with SGSM2. The GTP-bound form but not the GDP-bound form interacts with HPS4 and the BLOC-3 complex (heterodimer of HPS1 and HPS4) but does not interact with HPS1 alone. Interacts (GTP-bound form) with NDE1; two RAB9A-GTP molecules lie on the opposite sides of the NDE1 homodimer; the interaction leads to RAB9A-dynein motor tethering. Interacts (GTP-bound form) with NDEL1. The cofactor is Mg(2+).

It localises to the cell membrane. It is found in the endoplasmic reticulum membrane. The protein resides in the golgi apparatus membrane. Its subcellular location is the late endosome. The protein localises to the cytoplasmic vesicle. It localises to the phagosome membrane. It is found in the phagosome. The protein resides in the cytoplasmic vesicle membrane. Its subcellular location is the melanosome. It catalyses the reaction GTP + H2O = GDP + phosphate + H(+). With respect to regulation, regulated by guanine nucleotide exchange factors (GEFs) which promote the exchange of bound GDP for free GTP. Regulated by GTPase activating proteins (GAPs) which increase the GTP hydrolysis activity. Inhibited by GDP dissociation inhibitors (GDIs). Functionally, the small GTPases Rab are key regulators of intracellular membrane trafficking, from the formation of transport vesicles to their fusion with membranes. Rabs cycle between an inactive GDP-bound form and an active GTP-bound form that is able to recruit to membranes different sets of downstream effectors directly responsible for vesicle formation, movement, tethering and fusion. RAB9A is involved in the transport of proteins between the endosomes and the trans-Golgi network (TGN). Specifically uses NDE1/NDEL1 as an effector to interact with the dynein motor complex in order to control retrograde trafficking of RAB9-associated late endosomes to the TGN. Involved in the recruitment of SGSM2 to melanosomes and is required for the proper trafficking of melanogenic enzymes TYR, TYRP1 and DCT/TYRP2 to melanosomes in melanocytes. The polypeptide is Ras-related protein Rab-9A (Rattus norvegicus (Rat)).